The following is a 187-amino-acid chain: Fibroblast growth factor 4A (187 aa).

The N-terminal stretch at 1–22 (MTVPSALVPILLLGTAAVMVQC) is a signal peptide.

This sequence belongs to the heparin-binding growth factors family.

It localises to the secreted. In terms of biological role, plays an important role in the regulation of embryonic development, cell proliferation, and cell differentiation. Good candidate for an inducing factor with possible roles both in mesoderm induction at the blastula stage and in the formation of the anteroposterior axis at the gastrula stage. The sequence is that of Fibroblast growth factor 4A (fgf4-a) from Xenopus laevis (African clawed frog).